The sequence spans 380 residues: 1-deoxy-D-xylulose 5-phosphate reductoisomerase (380 aa).

Residues threonine 10, glycine 11, serine 12, isoleucine 13, glycine 36, arginine 37, asparagine 38, and asparagine 120 each coordinate NADPH. Lysine 121 contributes to the 1-deoxy-D-xylulose 5-phosphate binding site. Glutamate 122 contributes to the NADPH binding site. Residue aspartate 146 participates in Mn(2+) binding. Serine 147, glutamate 148, serine 172, and histidine 195 together coordinate 1-deoxy-D-xylulose 5-phosphate. Glutamate 148 is a Mn(2+) binding site. Glycine 201 contacts NADPH. Serine 208, asparagine 213, lysine 214, and glutamate 217 together coordinate 1-deoxy-D-xylulose 5-phosphate. Glutamate 217 contributes to the Mn(2+) binding site.

It belongs to the DXR family. Mg(2+) is required as a cofactor. Requires Mn(2+) as cofactor.

The catalysed reaction is 2-C-methyl-D-erythritol 4-phosphate + NADP(+) = 1-deoxy-D-xylulose 5-phosphate + NADPH + H(+). The protein operates within isoprenoid biosynthesis; isopentenyl diphosphate biosynthesis via DXP pathway; isopentenyl diphosphate from 1-deoxy-D-xylulose 5-phosphate: step 1/6. Functionally, catalyzes the NADPH-dependent rearrangement and reduction of 1-deoxy-D-xylulose-5-phosphate (DXP) to 2-C-methyl-D-erythritol 4-phosphate (MEP). The polypeptide is 1-deoxy-D-xylulose 5-phosphate reductoisomerase (Listeria welshimeri serovar 6b (strain ATCC 35897 / DSM 20650 / CCUG 15529 / CIP 8149 / NCTC 11857 / SLCC 5334 / V8)).